Here is a 134-residue protein sequence, read N- to C-terminus: Methylglyoxal synthase (134 aa).

In terms of domain architecture, MGS-like spans 1–134 (MNIALIAHDN…DWRERVKERG (134 aa)). Substrate-binding positions include histidine 8, lysine 12, 34-37 (TGTT), and 54-55 (SG). The Proton donor/acceptor role is filled by aspartate 60. A substrate-binding site is contributed by histidine 87.

This sequence belongs to the methylglyoxal synthase family.

It catalyses the reaction dihydroxyacetone phosphate = methylglyoxal + phosphate. In terms of biological role, catalyzes the formation of methylglyoxal from dihydroxyacetone phosphate. This Alkaliphilus metalliredigens (strain QYMF) protein is Methylglyoxal synthase.